Reading from the N-terminus, the 239-residue chain is Cysteine-rich venom protein kaouthin-1 (239 aa).

Residues 1–18 (MIAFSLLCLAAVLRQSFG) form the signal peptide. The SCP domain maps to 37–165 (VDLHNSLRRR…AWSYFYVCQY (129 aa)). 8 disulfides stabilise this stretch: C74-C152, C91-C166, C147-C163, C185-C192, C188-C197, C201-C234, C210-C228, and C219-C232. The region spanning 201-234 (CTIYNKLTNCDSLLKQGSCQDDWIKSNCPASCFC) is the ShKT domain.

It belongs to the CRISP family. As to expression, expressed by the venom gland.

It is found in the secreted. Functionally, inhibits calcium-activated potassium channels (KCa), voltage-gated potassium channel (Kv), and the calcium release channel/ryanodine receptor (RyR). The protein is Cysteine-rich venom protein kaouthin-1 of Naja kaouthia (Monocled cobra).